A 369-amino-acid polypeptide reads, in one-letter code: S-adenosyl-L-methionine-dependent uroporphyrinogen III methyltransferase, chloroplastic (369 aa).

The transit peptide at 1 to 28 directs the protein to the chloroplast; it reads MALVQRIPISSSSIRNWQQARTNLTPIC. Residues P124, 200 to 202, 230 to 231, M284, and T341 each bind S-adenosyl-L-homocysteine; these read GGD and TA.

Belongs to the precorrin methyltransferase family. In terms of tissue distribution, mostly expressed in leaves, and, to a lower extent, in stems, flowers and siliques.

The protein resides in the plastid. It localises to the chloroplast. The catalysed reaction is uroporphyrinogen III + 2 S-adenosyl-L-methionine = precorrin-2 + 2 S-adenosyl-L-homocysteine + H(+). It participates in porphyrin-containing compound metabolism; siroheme biosynthesis; precorrin-2 from uroporphyrinogen III: step 1/1. Its function is as follows. Essential protein required for siroheme biosynthesis. Catalyzes the two successive C-2 and C-7 methylation reactions involved in the conversion of uroporphyrinogen III to precorrin-2 via the intermediate formation of precorrin-1. It is a step in the biosynthesis of siroheme. Promotes nitrogen and sulfur assimilation as well as photosynthesis efficiency by triggering chlorophyll, nitrite reductase (NiR) and sulfite reductase (SiR) biosynthesis. This chain is S-adenosyl-L-methionine-dependent uroporphyrinogen III methyltransferase, chloroplastic, found in Arabidopsis thaliana (Mouse-ear cress).